The following is a 132-amino-acid chain: Acid shock protein (132 aa).

Positions 1–21 (MKKVLALVVAAAMGLSSAAFA) are cleaved as a signal peptide. The span at 20-45 (FAAETTTSSAAPATATATTTKAAPAK) shows a compositional bias: low complexity. The interval 20–132 (FAAETTTSSA…AAKPAAQPAA (113 aa)) is disordered. A propeptide spanning residues 22 to 90 (AETTTSSAAP…TTAPVEQKAQ (69 aa)) is cleaved from the precursor. The span at 62–71 (AAKKHHKKAV) shows a compositional bias: basic residues. Composition is skewed to low complexity over residues 76-90 (AAPA…QKAQ) and 100-109 (AKPAVAQKAQ). The span at 110–119 (AAKKHHKKAV) shows a compositional bias: basic residues.

This sequence belongs to the Asr family. Post-translationally, proteolytic processing gives rise to the active protein.

The protein resides in the periplasm. In terms of biological role, required for growth and/or survival at acidic conditions. This chain is Acid shock protein, found in Enterobacter sp. (strain 638).